We begin with the raw amino-acid sequence, 255 residues long: ATP synthase subunit a (255 aa).

6 consecutive transmembrane segments (helical) span residues 40–60 (TEPIFMSLLIMVLFVLLASEV), 109–129 (LIGGSAAFIFFSNASALIPGV), 135–155 (NLNITIGCAVVVFVLFNYYGL), 163–183 (VAHLAGPKWYLAPLIFPIEVI), 196–218 (LMLNIGVDHLVASIFLGLVALFV), and 230–250 (IVVQTLVFCLLSCIYIGLATE).

Belongs to the ATPase A chain family. F-type ATPases have 2 components, CF(1) - the catalytic core - and CF(0) - the membrane proton channel. CF(1) has five subunits: alpha(3), beta(3), gamma(1), delta(1), epsilon(1). CF(0) has three main subunits: a(1), b(2) and c(9-12). The alpha and beta chains form an alternating ring which encloses part of the gamma chain. CF(1) is attached to CF(0) by a central stalk formed by the gamma and epsilon chains, while a peripheral stalk is formed by the delta and b chains.

It localises to the cell inner membrane. In terms of biological role, key component of the proton channel; it plays a direct role in the translocation of protons across the membrane. This is ATP synthase subunit a from Sorangium cellulosum (strain So ce56) (Polyangium cellulosum (strain So ce56)).